Consider the following 491-residue polypeptide: Probable allantoate deiminase (491 aa).

The N-terminal stretch at 1 to 32 (MALLLSYPRRHPSIHLLILSAYALFLLPILDG) is a signal peptide. Asn109 is a glycosylation site (N-linked (GlcNAc...) asparagine). Mn(2+) contacts are provided by His120, Asp131, Glu168, and His234. N-linked (GlcNAc...) asparagine glycosylation is found at Asn265 and Asn343. His454 is a binding site for Mn(2+).

Belongs to the peptidase M20A family. In terms of assembly, homodimer. Mn(2+) serves as cofactor.

The protein localises to the endoplasmic reticulum. It carries out the reaction allantoate + H2O + 2 H(+) = (S)-2-ureidoglycine + NH4(+) + CO2. Involved in the catabolism of purine nucleotides. The sequential activity of AAH, UGLYAH and UAH allows a complete purine breakdown without the intermediate generation of urea. The chain is Probable allantoate deiminase from Oryza sativa subsp. japonica (Rice).